The chain runs to 365 residues: Delta(7)-sterol 5(6)-desaturase ERG3 (365 aa).

The Cytoplasmic segment spans residues 1 to 92 (MDLVLEVADH…LLPRSSILRE (92 aa)). Residues 93–113 (FLSLWVIVTIFGLLLYLFTAS) form a helical membrane-spanning segment. The Lumenal portion of the chain corresponds to 114–140 (LSYVFVFDKSIFNHPRYLKNQMAMEIK). The helical transmembrane segment at 141 to 161 (LAVSAIPWMSMLTVPWFVMEL) threads the bilayer. Residues 162–242 (NGHSKLYMKI…VDGFLQSISY (81 aa)) are Cytoplasmic-facing. In terms of domain architecture, Fatty acid hydroxylase spans 187–311 (TFIFFTDCGV…FTTLWDRLGG (125 aa)). The Histidine box-1 motif lies at 200 to 204 (HRWLH). A Histidine box-2 motif is present at residues 213–217 (HKPHH). A helical membrane pass occupies residues 243 to 263 (HIYPLILPLHKVSYLILFTFV). The Lumenal portion of the chain corresponds to 264–365 (NFWTVMIHDG…ENDPNTKKNN (102 aa)). A Histidine box-3 motif is present at residues 288-292 (HTVHH). Glycyl lysine isopeptide (Lys-Gly) (interchain with G-Cter in ubiquitin) cross-links involve residues Lys324 and Lys344.

The protein belongs to the sterol desaturase family. In terms of assembly, interacts with ERG28. It depends on Fe cation as a cofactor.

It is found in the endoplasmic reticulum membrane. The catalysed reaction is episterol + 2 Fe(II)-[cytochrome b5] + O2 + 2 H(+) = 5-dehydroepisterol + 2 Fe(III)-[cytochrome b5] + 2 H2O. The protein operates within steroid metabolism; ergosterol biosynthesis; ergosterol from zymosterol: step 3/5. Its function is as follows. C-5 sterol desaturase; part of the third module of ergosterol biosynthesis pathway that includes the late steps of the pathway. ERG3 catalyzes the introduction of a C-5 double bond in the B ring to produce 5-dehydroepisterol. The third module or late pathway involves the ergosterol synthesis itself through consecutive reactions that mainly occur in the endoplasmic reticulum (ER) membrane. Firstly, the squalene synthase ERG9 catalyzes the condensation of 2 farnesyl pyrophosphate moieties to form squalene, which is the precursor of all steroids. Squalene synthase is crucial for balancing the incorporation of farnesyl diphosphate (FPP) into sterol and nonsterol isoprene synthesis. Secondly, the squalene epoxidase ERG1 catalyzes the stereospecific oxidation of squalene to (S)-2,3-epoxysqualene, which is considered to be a rate-limiting enzyme in steroid biosynthesis. Then, the lanosterol synthase ERG7 catalyzes the cyclization of (S)-2,3 oxidosqualene to lanosterol, a reaction that forms the sterol core. In the next steps, lanosterol is transformed to zymosterol through a complex process involving various demethylation, reduction and desaturation reactions. The lanosterol 14-alpha-demethylase ERG11 (also known as CYP51) catalyzes C14-demethylation of lanosterol to produce 4,4'-dimethyl cholesta-8,14,24-triene-3-beta-ol, which is critical for ergosterol biosynthesis. The C-14 reductase ERG24 reduces the C14=C15 double bond of 4,4-dimethyl-cholesta-8,14,24-trienol to produce 4,4-dimethyl-cholesta-8,24-dienol. 4,4-dimethyl-cholesta-8,24-dienol is substrate of the C-4 demethylation complex ERG25-ERG26-ERG27 in which ERG25 catalyzes the three-step monooxygenation required for the demethylation of 4,4-dimethyl and 4alpha-methylsterols, ERG26 catalyzes the oxidative decarboxylation that results in a reduction of the 3-beta-hydroxy group at the C-3 carbon to an oxo group, and ERG27 is responsible for the reduction of the keto group on the C-3. ERG28 has a role as a scaffold to help anchor ERG25, ERG26 and ERG27 to the endoplasmic reticulum and ERG29 regulates the activity of the iron-containing C4-methylsterol oxidase ERG25. Then, the sterol 24-C-methyltransferase ERG6 catalyzes the methyl transfer from S-adenosyl-methionine to the C-24 of zymosterol to form fecosterol. The C-8 sterol isomerase ERG2 catalyzes the reaction which results in unsaturation at C-7 in the B ring of sterols and thus converts fecosterol to episterol. The sterol-C5-desaturase ERG3 then catalyzes the introduction of a C-5 double bond in the B ring to produce 5-dehydroepisterol. The C-22 sterol desaturase ERG5 further converts 5-dehydroepisterol into ergosta-5,7,22,24(28)-tetraen-3beta-ol by forming the C-22(23) double bond in the sterol side chain. Finally, ergosta-5,7,22,24(28)-tetraen-3beta-ol is substrate of the C-24(28) sterol reductase ERG4 to produce ergosterol. The sequence is that of Delta(7)-sterol 5(6)-desaturase ERG3 from Saccharomyces cerevisiae (strain ATCC 204508 / S288c) (Baker's yeast).